An 87-amino-acid polypeptide reads, in one-letter code: Small ribosomal subunit protein uS17 (87 aa).

It belongs to the universal ribosomal protein uS17 family. In terms of assembly, part of the 30S ribosomal subunit.

One of the primary rRNA binding proteins, it binds specifically to the 5'-end of 16S ribosomal RNA. The chain is Small ribosomal subunit protein uS17 from Bacillus subtilis (strain 168).